Reading from the N-terminus, the 102-residue chain is NADH-quinone oxidoreductase subunit K (102 aa).

A run of 3 helical transmembrane segments spans residues L5–V25, I30–A50, and I62–L82.

This sequence belongs to the complex I subunit 4L family. As to quaternary structure, NDH-1 is composed of 14 different subunits. Subunits NuoA, H, J, K, L, M, N constitute the membrane sector of the complex.

The protein localises to the cell inner membrane. It carries out the reaction a quinone + NADH + 5 H(+)(in) = a quinol + NAD(+) + 4 H(+)(out). Its function is as follows. NDH-1 shuttles electrons from NADH, via FMN and iron-sulfur (Fe-S) centers, to quinones in the respiratory chain. The immediate electron acceptor for the enzyme in this species is believed to be ubiquinone. Couples the redox reaction to proton translocation (for every two electrons transferred, four hydrogen ions are translocated across the cytoplasmic membrane), and thus conserves the redox energy in a proton gradient. The protein is NADH-quinone oxidoreductase subunit K of Phenylobacterium zucineum (strain HLK1).